The following is a 36-amino-acid chain: Photosystem I reaction center subunit VIII (36 aa).

A helical transmembrane segment spans residues L6–L28.

This sequence belongs to the PsaI family.

The protein resides in the plastid. It is found in the chloroplast thylakoid membrane. Functionally, may help in the organization of the PsaL subunit. This chain is Photosystem I reaction center subunit VIII, found in Acorus gramineus (Dwarf sweet flag).